The primary structure comprises 124 residues: Small ribosomal subunit protein uS12 (124 aa).

Position 89 is a 3-methylthioaspartic acid (aspartate 89).

This sequence belongs to the universal ribosomal protein uS12 family. Part of the 30S ribosomal subunit. Contacts proteins S8 and S17. May interact with IF1 in the 30S initiation complex.

Functionally, with S4 and S5 plays an important role in translational accuracy. In terms of biological role, interacts with and stabilizes bases of the 16S rRNA that are involved in tRNA selection in the A site and with the mRNA backbone. Located at the interface of the 30S and 50S subunits, it traverses the body of the 30S subunit contacting proteins on the other side and probably holding the rRNA structure together. The combined cluster of proteins S8, S12 and S17 appears to hold together the shoulder and platform of the 30S subunit. This chain is Small ribosomal subunit protein uS12, found in Shewanella halifaxensis (strain HAW-EB4).